The chain runs to 206 residues: Probable nicotinate-nucleotide adenylyltransferase (206 aa).

It belongs to the NadD family.

It carries out the reaction nicotinate beta-D-ribonucleotide + ATP + H(+) = deamido-NAD(+) + diphosphate. It functions in the pathway cofactor biosynthesis; NAD(+) biosynthesis; deamido-NAD(+) from nicotinate D-ribonucleotide: step 1/1. Its function is as follows. Catalyzes the reversible adenylation of nicotinate mononucleotide (NaMN) to nicotinic acid adenine dinucleotide (NaAD). This is Probable nicotinate-nucleotide adenylyltransferase from Paenarthrobacter aurescens (strain TC1).